Reading from the N-terminus, the 1324-residue chain is Coiled-coil domain-containing protein 171 (1324 aa).

Coiled coils occupy residues 29–296 (KNET…RAAH), 325–393 (AEAV…RLQY), 453–521 (FSVV…KCAD), 599–712 (SELC…VREN), and 981–1145 (FTQR…KECV). A compositionally biased stretch (polar residues) spans 1301–1312 (PHSLSSQSSPGV). Residues 1301–1324 (PHSLSSQSSPGVPTNAKRPSQIGL) are disordered.

In Mus musculus (Mouse), this protein is Coiled-coil domain-containing protein 171 (Ccdc171).